Consider the following 353-residue polypeptide: Stachydrine N-demethylase reductase subunit Stc4 (353 aa).

The FAD-binding FR-type domain maps to 11-114 (SDAEPLECVT…IGPAGKFSIV (104 aa)). Residues 269 to 353 (AEIAFALSGV…KPLRRVSVEA (85 aa)) enclose the 2Fe-2S ferredoxin-type domain. The [2Fe-2S] cluster site is built by Cys-303, Cys-308, Cys-311, and Cys-341.

The protein in the N-terminal section; belongs to the FAD-binding oxidoreductase type 6 family. The system is probably composed of an oxygenase subunit (Stc2) and two reductase subunits (Stc3 and Stc4). FAD serves as cofactor. Requires [2Fe-2S] cluster as cofactor.

Reductase involved in the catabolism of stachydrine (L-proline betaine), a source of carbon and nitrogen. Part of a Rieske-type oxygenase system that catalyzes the demethylation of stachydrine to produce N-methyl-L-proline (monomethylproline). This subunit is probably involved in the transfer of electrons from NAD(P)H to the catalytic subunit Stc2. The chain is Stachydrine N-demethylase reductase subunit Stc4 from Rhizobium meliloti (strain 1021) (Ensifer meliloti).